The sequence spans 620 residues: Siderophore iron transporter ARN2 (620 aa).

Residues 1–42 (MIEVPEDNRSSQTKRKNTEKNCNELMVDEKMDDDSSPRDEMK) are disordered. Positions 16-42 (KNTEKNCNELMVDEKMDDDSSPRDEMK) are enriched in basic and acidic residues. 14 consecutive transmembrane segments (helical) span residues 71-93 (IFLF…RGTY), 106-128 (LIST…FGGL), 135-152 (LTLF…TIIQ), 162-184 (AAGA…LMLS), 191-213 (WRLF…SGSV), 223-245 (WSWN…ILCM), 286-308 (VVGV…LAGG), 318-335 (IIGP…FIYW), 355-377 (VWAP…GYLY), 392-414 (TRII…LIVT), 421-438 (SYII…GLFY), 448-470 (GGII…PTIV), 491-513 (VFRI…SLYP), and 561-578 (VIVA…TFCV).

It belongs to the major facilitator superfamily.

The protein resides in the endosome membrane. Involved in the transport of siderophore triacestylfusarinine C and so has a role in iron homeostasis. The sequence is that of Siderophore iron transporter ARN2 (ARN2) from Saccharomyces cerevisiae (strain ATCC 204508 / S288c) (Baker's yeast).